The sequence spans 823 residues: High affinity cAMP-specific and IBMX-insensitive 3',5'-cyclic phosphodiesterase 8A (823 aa).

Residues Met-1 to Gly-55 are disordered. The segment covering Ser-10–Asp-19 has biased composition (basic and acidic residues). One can recognise a PAS domain in the interval Ala-209–Lys-280. A PAC domain is found at Gln-283 to Asn-325. The tract at residues Asp-338–Arg-373 is disordered. Ser-355 carries the phosphoserine; by PKA modification. A phosphoserine mark is found at Ser-382 and Ser-452. A Phosphotyrosine modification is found at Tyr-456. In terms of domain architecture, PDEase spans Ser-475–Lys-814. His-551 serves as the catalytic Proton donor. His-555, His-591, Asp-592, and Asp-720 together coordinate a divalent metal cation.

This sequence belongs to the cyclic nucleotide phosphodiesterase family. PDE8 subfamily. As to quaternary structure, interacts with RAF1. The interaction promotes RAF1 activity. A divalent metal cation serves as cofactor. In terms of processing, phosphorylated at Ser-355 by PKA under elevated cAMP conditions, this enhances catalytic activity. In terms of tissue distribution, expressed in multiple tissues, with highest levels in testis, followed by liver, heart, skeletal muscle, and kidney. In the testis, expressed specifically in the seminiferous tubules, in postmitotic pachytene spermatocytes. Low expression, if any, in lung, smooth muscle, pancreas, thyroid, thymus, submaxillary gland, spleen, prostate, epididymus, uterus.

The catalysed reaction is 3',5'-cyclic AMP + H2O = AMP + H(+). It participates in purine metabolism; 3',5'-cyclic AMP degradation; AMP from 3',5'-cyclic AMP: step 1/1. Its activity is regulated as follows. Inhibited by dipyridimole. Insensitive to selective PDE inhibitor rolipram and to the non-selective inhibitor, IBMX. In terms of biological role, hydrolyzes the second messenger cAMP, which is a key regulator of many important physiological processes. May be involved in maintaining basal levels of the cyclic nucleotide and/or in the cAMP regulation of germ cell development. Binding to RAF1 reduces RAF1 'Ser-259' inhibitory-phosphorylation and stimulates RAF1-dependent EGF-activated ERK-signaling. Protects against cell death induced by hydrogen peroxide and staurosporine. The sequence is that of High affinity cAMP-specific and IBMX-insensitive 3',5'-cyclic phosphodiesterase 8A (Pde8a) from Mus musculus (Mouse).